The primary structure comprises 181 residues: Adenine phosphoribosyltransferase (181 aa).

The protein belongs to the purine/pyrimidine phosphoribosyltransferase family. As to quaternary structure, homodimer.

The protein localises to the cytoplasm. It catalyses the reaction AMP + diphosphate = 5-phospho-alpha-D-ribose 1-diphosphate + adenine. Its pathway is purine metabolism; AMP biosynthesis via salvage pathway; AMP from adenine: step 1/1. Catalyzes a salvage reaction resulting in the formation of AMP, that is energically less costly than de novo synthesis. In Rhodopseudomonas palustris (strain ATCC BAA-98 / CGA009), this protein is Adenine phosphoribosyltransferase.